Reading from the N-terminus, the 154-residue chain is Ribonuclease H (154 aa).

An RNase H type-1 domain is found at 1-142; sequence MTKHVEIFTD…CDELARTAAE (142 aa). Residues aspartate 10, glutamate 48, aspartate 70, and aspartate 134 each coordinate Mg(2+).

This sequence belongs to the RNase H family. Monomer. It depends on Mg(2+) as a cofactor.

It is found in the cytoplasm. It catalyses the reaction Endonucleolytic cleavage to 5'-phosphomonoester.. Functionally, endonuclease that specifically degrades the RNA of RNA-DNA hybrids. The sequence is that of Ribonuclease H from Vibrio campbellii (strain ATCC BAA-1116).